Here is a 43-residue protein sequence, read N- to C-terminus: Protein PsbN (43 aa).

A helical transmembrane segment spans residues 5–25 (TVLSIFISSLLLGITIYSIYI).

It belongs to the PsbN family.

The protein resides in the plastid. It localises to the chloroplast thylakoid membrane. May play a role in photosystem I and II biogenesis. The sequence is that of Protein PsbN from Gracilaria tenuistipitata var. liui (Red alga).